Consider the following 139-residue polypeptide: Protein archease (139 aa).

Ca(2+)-binding residues include Asp12, Asp138, and Ile139.

Belongs to the archease family.

Functionally, activates the tRNA-splicing ligase complex by facilitating the enzymatic turnover of catalytic subunit RtcB. Acts by promoting the guanylylation of RtcB, a key intermediate step in tRNA ligation. Can also alter the NTP specificity of RtcB such that ATP, dGTP or ITP is used efficiently. The polypeptide is Protein archease (Saccharolobus islandicus (strain L.S.2.15 / Lassen #1) (Sulfolobus islandicus)).